We begin with the raw amino-acid sequence, 333 residues long: tRNA(Ile)-lysidine synthase (333 aa).

33 to 38 (SGGADS) is an ATP binding site.

The protein belongs to the tRNA(Ile)-lysidine synthase family.

Its subcellular location is the cytoplasm. The enzyme catalyses cytidine(34) in tRNA(Ile2) + L-lysine + ATP = lysidine(34) in tRNA(Ile2) + AMP + diphosphate + H(+). Its function is as follows. Ligates lysine onto the cytidine present at position 34 of the AUA codon-specific tRNA(Ile) that contains the anticodon CAU, in an ATP-dependent manner. Cytidine is converted to lysidine, thus changing the amino acid specificity of the tRNA from methionine to isoleucine. In Salinispora tropica (strain ATCC BAA-916 / DSM 44818 / JCM 13857 / NBRC 105044 / CNB-440), this protein is tRNA(Ile)-lysidine synthase.